The chain runs to 272 residues: MPQHKVSSDSPIGIFDSGIGGLTVVKAVQAALPSERIIYFGDTARVPYGSKSQVTIRKYAREDTELLMKHQPKLIIVACNTVSALALDVVEQTAGGIPVIGVLKAGAELAVQKTKSGRIGVIGTQATIGSNAYTCAIREEKETLEVFPKACPLFVPLAEEGFIDHPATRLVAEEYLAAFTGKEIDTLVLGCTHYPILRKIIESITGPEITIIDSAEAVASKAGELLAARGLLNQSPEKALPHLMVSDLPQKFRELYRLFMGTELPDVELVGM.

Substrate contacts are provided by residues 16-17 and 48-49; these read DS and YG. Cys-79 acts as the Proton donor/acceptor in catalysis. 80–81 provides a ligand contact to substrate; it reads NT. The active-site Proton donor/acceptor is Cys-191. 192 to 193 provides a ligand contact to substrate; that stretch reads TH.

Belongs to the aspartate/glutamate racemases family.

It carries out the reaction L-glutamate = D-glutamate. The protein operates within cell wall biogenesis; peptidoglycan biosynthesis. In terms of biological role, provides the (R)-glutamate required for cell wall biosynthesis. In Chlorobaculum tepidum (strain ATCC 49652 / DSM 12025 / NBRC 103806 / TLS) (Chlorobium tepidum), this protein is Glutamate racemase.